The primary structure comprises 439 residues: MSETHLSTQKFADLPLHPEVKQALAENGFEFCTPIQALSLPVLLQSKDIAGQAQTGTGKTMAFLVATFNHLLSTPIPEGRQINQPRAIIMAPTRELAIQIAKDAILLAKHTRLKVGIVYGGESYDVQRKVLDQGVDILIGTTGRIIDYVRQGIISLTAIQAVVLDEADRMFDLGFIKDIRFLFRRMPDANQRLNMLFSATLSMKVQELAYDHMNDPVKVDIAPDEKTSKNIKEEVFYPSQEDKMRLLLTLIEEDWPEKAIVFSNTKHSCENLWSWLEGDGHRVGLLTGDVPQKKRIRILEQFTSGQLDILVATDVAARGLHISDVSHVYNYDLPDDCEDYVHRIGRTGRAGNKGVSISFACEEYALNLPAIESYINHSIPVSNYDSSALLEDIPAPVKIPRKHPAGTRNLRERAGAGRPQGAHRSGGRPPRHDRTRRHS.

Positions 9–37 (QKFADLPLHPEVKQALAENGFEFCTPIQA) match the Q motif motif. In terms of domain architecture, Helicase ATP-binding spans 40–219 (LPVLLQSKDI…YDHMNDPVKV (180 aa)). Residue 53–60 (AQTGTGKT) coordinates ATP. Positions 165–168 (DEAD) match the DEAD box motif. The region spanning 243–390 (KMRLLLTLIE…VSNYDSSALL (148 aa)) is the Helicase C-terminal domain. The interval 398-439 (KIPRKHPAGTRNLRERAGAGRPQGAHRSGGRPPRHDRTRRHS) is disordered. The span at 425–439 (SGGRPPRHDRTRRHS) shows a compositional bias: basic residues.

This sequence belongs to the DEAD box helicase family. RhlB subfamily. As to quaternary structure, component of the RNA degradosome, which is a multiprotein complex involved in RNA processing and mRNA degradation.

It is found in the cytoplasm. The catalysed reaction is ATP + H2O = ADP + phosphate + H(+). DEAD-box RNA helicase involved in RNA degradation. Has RNA-dependent ATPase activity and unwinds double-stranded RNA. This chain is ATP-dependent RNA helicase RhlB, found in Shewanella putrefaciens (strain CN-32 / ATCC BAA-453).